A 562-amino-acid polypeptide reads, in one-letter code: Dihydroxy-acid dehydratase (562 aa).

Asp80 contacts Mg(2+). Cys121 is a [2Fe-2S] cluster binding site. Mg(2+) contacts are provided by Asp122 and Lys123. Lys123 bears the N6-carboxylysine mark. Cys194 provides a ligand contact to [2Fe-2S] cluster. Glu446 is a Mg(2+) binding site. The Proton acceptor role is filled by Ser472.

Belongs to the IlvD/Edd family. As to quaternary structure, homodimer. The cofactor is [2Fe-2S] cluster. It depends on Mg(2+) as a cofactor.

The catalysed reaction is (2R)-2,3-dihydroxy-3-methylbutanoate = 3-methyl-2-oxobutanoate + H2O. It catalyses the reaction (2R,3R)-2,3-dihydroxy-3-methylpentanoate = (S)-3-methyl-2-oxopentanoate + H2O. It participates in amino-acid biosynthesis; L-isoleucine biosynthesis; L-isoleucine from 2-oxobutanoate: step 3/4. It functions in the pathway amino-acid biosynthesis; L-valine biosynthesis; L-valine from pyruvate: step 3/4. In terms of biological role, functions in the biosynthesis of branched-chain amino acids. Catalyzes the dehydration of (2R,3R)-2,3-dihydroxy-3-methylpentanoate (2,3-dihydroxy-3-methylvalerate) into 2-oxo-3-methylpentanoate (2-oxo-3-methylvalerate) and of (2R)-2,3-dihydroxy-3-methylbutanoate (2,3-dihydroxyisovalerate) into 2-oxo-3-methylbutanoate (2-oxoisovalerate), the penultimate precursor to L-isoleucine and L-valine, respectively. The sequence is that of Dihydroxy-acid dehydratase from Macrococcus caseolyticus (strain JCSC5402) (Macrococcoides caseolyticum).